The sequence spans 156 residues: MSRKKSAKVREVLADPIFNSVVVTKLINTIMLDGKKSIAQDILYSAFDLVKEKTKKDPMQVFTQAVENITPQLEIRTRRIGGTNYQVPTEVSKRRKQALSLRWLVQYARLRNDKSMDLRLANEIIDAANKTGGAIKKREDTHKMAEANKAFAHFRW.

Belongs to the universal ribosomal protein uS7 family. Part of the 30S ribosomal subunit. Contacts proteins S9 and S11.

Functionally, one of the primary rRNA binding proteins, it binds directly to 16S rRNA where it nucleates assembly of the head domain of the 30S subunit. Is located at the subunit interface close to the decoding center, probably blocks exit of the E-site tRNA. This chain is Small ribosomal subunit protein uS7, found in Mycoplasmopsis synoviae (strain 53) (Mycoplasma synoviae).